Here is a 38-residue protein sequence, read N- to C-terminus: Large ribosomal subunit protein bL36 (38 aa).

It belongs to the bacterial ribosomal protein bL36 family.

In Aster yellows witches'-broom phytoplasma (strain AYWB), this protein is Large ribosomal subunit protein bL36.